The following is a 124-amino-acid chain: MAYLLVFVGGGLGAMFRHFINTLSGRLLGTAFPYHTFFINVTGSIVMGLIAGYLAFKGGSSQHFRLFLMTGILGGYTTFSAFSLDAALLYERGAVGLAVVYVLGSVVLAIAGLFGGMALIRAMT.

Transmembrane regions (helical) follow at residues 1 to 21 (MAYL…HFIN), 36 to 56 (TFFI…YLAF), 66 to 86 (LFLM…SLDA), and 94 to 114 (AVGL…AGLF). 2 residues coordinate Na(+): Gly-74 and Thr-77.

Belongs to the fluoride channel Fluc/FEX (TC 1.A.43) family.

Its subcellular location is the cell inner membrane. It catalyses the reaction fluoride(in) = fluoride(out). Na(+) is not transported, but it plays an essential structural role and its presence is essential for fluoride channel function. In terms of biological role, fluoride-specific ion channel. Important for reducing fluoride concentration in the cell, thus reducing its toxicity. This Rhodopseudomonas palustris (strain ATCC BAA-98 / CGA009) protein is Fluoride-specific ion channel FluC.